The following is a 213-amino-acid chain: 2-dehydro-3-deoxy-phosphogluconate aldolase (213 aa).

The Proton acceptor role is filled by glutamate 45. The pyruvate site is built by arginine 49, threonine 73, and lysine 133. The Schiff-base intermediate with substrate role is filled by lysine 133.

This sequence belongs to the KHG/KDPG aldolase family. In terms of assembly, homotrimer.

It is found in the cytoplasm. It carries out the reaction 2-dehydro-3-deoxy-6-phospho-D-gluconate = D-glyceraldehyde 3-phosphate + pyruvate. The protein operates within carbohydrate acid metabolism; 2-dehydro-3-deoxy-D-gluconate degradation; D-glyceraldehyde 3-phosphate and pyruvate from 2-dehydro-3-deoxy-D-gluconate: step 2/2. In terms of biological role, involved in the degradation of glucose via the Entner-Doudoroff pathway. Catalyzes the reversible, stereospecific retro-aldol cleavage of 2-keto-3-deoxy-6-phosphogluconate (KDPG) to pyruvate and D-glyceraldehyde-3-phosphate. This Dickeya dadantii (strain 3937) (Erwinia chrysanthemi (strain 3937)) protein is 2-dehydro-3-deoxy-phosphogluconate aldolase (eda).